A 270-amino-acid chain; its full sequence is MSILDDIIDDTRELVEQRKQETPTSELKERPFYDEREPLSLAEALKERGLSFIAEVKKASPSKGVIRDPFDPAAIAQQYAEHDAAAISVLTEPLHFEGALEHMAWIRAHVPETPLLRKDFIIDPYQLVEARAVGADAVLLIATALDPGQLAELHAAATELGLSCLVEVYEEEDLDKIDWEQVSVLGVNNRDLHTFEVDLDNSLRIFDQTPKGVGRVAESGLSDPETLVRLRKAGVNGVLIGEHLMRAEHPGEALSRLRAEGKKIAAQQAG.

It belongs to the TrpC family.

It carries out the reaction 1-(2-carboxyphenylamino)-1-deoxy-D-ribulose 5-phosphate + H(+) = (1S,2R)-1-C-(indol-3-yl)glycerol 3-phosphate + CO2 + H2O. It participates in amino-acid biosynthesis; L-tryptophan biosynthesis; L-tryptophan from chorismate: step 4/5. This chain is Indole-3-glycerol phosphate synthase, found in Salinibacter ruber (strain DSM 13855 / M31).